The following is a 991-amino-acid chain: Regulator of telomere elongation helicase 1 homolog (991 aa).

A Helicase ATP-binding domain is found at 7 to 319; that stretch reads NGIPVNFPFE…DDLVLLKEIL (313 aa). 42–49 provides a ligand contact to ATP; the sequence is SPTGTGKT. Positions 148, 166, 175, and 211 each coordinate [4Fe-4S] cluster. Positions 254 to 257 match the DEAH box motif; the sequence is DEAH. The tract at residues 812 to 833 is disordered; it reads SMKVNPHSRSTKSAGDDAEAGG.

Belongs to the helicase family. RAD3/XPD subfamily.

It is found in the nucleus. It carries out the reaction ATP + H2O = ADP + phosphate + H(+). A probable ATP-dependent DNA helicase implicated in DNA repair and the maintenance of genomic stability. Acts as an anti-recombinase to counteract toxic recombination and limit crossover during meiosis. Regulates meiotic recombination and crossover homeostasis by physically dissociating strand invasion events and thereby promotes noncrossover repair by meiotic synthesis dependent strand annealing (SDSA) as well as disassembly of D loop recombination intermediates. This chain is Regulator of telomere elongation helicase 1 homolog, found in Anopheles gambiae (African malaria mosquito).